The chain runs to 396 residues: Diphosphomevalonate decarboxylase (396 aa).

(R)-5-diphosphomevalonate contacts are provided by residues 19 to 22 (YWGK), R74, 153 to 158 (SGSACR), and T209.

It belongs to the diphosphomevalonate decarboxylase family. As to quaternary structure, homodimer.

The catalysed reaction is (R)-5-diphosphomevalonate + ATP = isopentenyl diphosphate + ADP + phosphate + CO2. The protein operates within isoprenoid biosynthesis; isopentenyl diphosphate biosynthesis via mevalonate pathway; isopentenyl diphosphate from (R)-mevalonate: step 3/3. Functionally, diphosphomevalonate decarboxylase; part of the second module of ergosterol biosynthesis pathway that includes the middle steps of the pathway. MVD1/ERG19 converts diphosphomevalonate into isopentenyl diphosphate. The second module is carried out in the vacuole and involves the formation of farnesyl diphosphate, which is also an important intermediate in the biosynthesis of ubiquinone, dolichol, heme and prenylated proteins. Activity by the mevalonate kinase ERG12 first converts mevalonate into 5-phosphomevalonate. 5-phosphomevalonate is then further converted to 5-diphosphomevalonate by the phosphomevalonate kinase ERG8. The diphosphomevalonate decarboxylase MVD1/ERG19 then produces isopentenyl diphosphate. The isopentenyl-diphosphate delta-isomerase IDI1 then catalyzes the 1,3-allylic rearrangement of the homoallylic substrate isopentenyl (IPP) to its highly electrophilic allylic isomer, dimethylallyl diphosphate (DMAPP). Finally the farnesyl diphosphate synthase ERG20 catalyzes the sequential condensation of isopentenyl pyrophosphate with dimethylallyl pyrophosphate, and then with the resultant geranylpyrophosphate to the ultimate product farnesyl pyrophosphate. The protein is Diphosphomevalonate decarboxylase of Saccharomyces cerevisiae (strain ATCC 204508 / S288c) (Baker's yeast).